The primary structure comprises 478 residues: DNA gyrase subunit B (478 aa).

Positions 319-438 (CELYLVEGDS…QGYLYVALPP (120 aa)) constitute a Toprim domain. The Mg(2+) site is built by Glu325, Asp403, and Asp405.

The protein belongs to the type II topoisomerase GyrB family. Heterotetramer, composed of two GyrA and two GyrB chains. In the heterotetramer, GyrA contains the active site tyrosine that forms a transient covalent intermediate with DNA, while GyrB binds cofactors and catalyzes ATP hydrolysis. It depends on Mg(2+) as a cofactor. Mn(2+) serves as cofactor. Ca(2+) is required as a cofactor.

It is found in the cytoplasm. It catalyses the reaction ATP-dependent breakage, passage and rejoining of double-stranded DNA.. In terms of biological role, a type II topoisomerase that negatively supercoils closed circular double-stranded (ds) DNA in an ATP-dependent manner to modulate DNA topology and maintain chromosomes in an underwound state. Negative supercoiling favors strand separation, and DNA replication, transcription, recombination and repair, all of which involve strand separation. Also able to catalyze the interconversion of other topological isomers of dsDNA rings, including catenanes and knotted rings. Type II topoisomerases break and join 2 DNA strands simultaneously in an ATP-dependent manner. This is DNA gyrase subunit B (gyrB) from Eisenibacter elegans (Flexibacter elegans).